Reading from the N-terminus, the 414-residue chain is Ribulose bisphosphate carboxylase large chain (414 aa).

Substrate-binding residues include asparagine 101 and threonine 151. The active-site Proton acceptor is lysine 153. Lysine 155 contributes to the substrate binding site. Mg(2+) contacts are provided by lysine 179, aspartate 181, and glutamate 182. Lysine 179 is modified (N6-carboxylysine). The Proton acceptor role is filled by histidine 272. Residues arginine 273, histidine 305, and serine 357 each contribute to the substrate site.

This sequence belongs to the RuBisCO large chain family. Type I subfamily. Heterohexadecamer of 8 large chains and 8 small chains; disulfide-linked. The disulfide link is formed within the large subunit homodimers. Mg(2+) serves as cofactor. Post-translationally, the disulfide bond which can form in the large chain dimeric partners within the hexadecamer appears to be associated with oxidative stress and protein turnover.

Its subcellular location is the plastid. The protein resides in the chloroplast. It catalyses the reaction 2 (2R)-3-phosphoglycerate + 2 H(+) = D-ribulose 1,5-bisphosphate + CO2 + H2O. The catalysed reaction is D-ribulose 1,5-bisphosphate + O2 = 2-phosphoglycolate + (2R)-3-phosphoglycerate + 2 H(+). Its function is as follows. RuBisCO catalyzes two reactions: the carboxylation of D-ribulose 1,5-bisphosphate, the primary event in carbon dioxide fixation, as well as the oxidative fragmentation of the pentose substrate in the photorespiration process. Both reactions occur simultaneously and in competition at the same active site. This Onychium japonicum (Japanese claw fern) protein is Ribulose bisphosphate carboxylase large chain (rbcL).